A 670-amino-acid chain; its full sequence is Amyloid beta A4 precursor protein-binding family B member 1-interacting protein (670 aa).

A Phosphoserine modification is found at Ser55. The Ras-associating domain occupies 179 to 266 (KKLVVKVHMD…KVLFLEKEER (88 aa)). Residues 313–422 (VPELEGALYL…WVMGIRIAKY (110 aa)) form the PH domain. The tract at residues 449–653 (VGTPMPAQPS…PGAPGNSEQD (205 aa)) is disordered. Positions 456 to 475 (QPSTVSSGLKTGTSQPNGQM) are enriched in polar residues. Phosphoserine is present on Ser532. Thr534 carries the post-translational modification Phosphothreonine. Ser537 is subject to Phosphoserine. Pro residues-rich tracts occupy residues 553–567 (PHPP…PPPP), 576–599 (LPPP…PPPA), 606–615 (LPPPPPPPPC), and 625–634 (PLPPKKPLVP).

This sequence belongs to the MRL family. Interacts, through the N-terminal Pro-rich region, with the WW domain of APBB1. Interacts with RAP1A, PFN1, VASP and ENAH. In terms of tissue distribution, ubiquitously expressed with high expression in the hematopoietic system.

It is found in the cell membrane. The protein resides in the cell projection. Its subcellular location is the lamellipodium. The protein localises to the cell junction. It localises to the focal adhesion. It is found in the cytoplasm. The protein resides in the cytoskeleton. Its function is as follows. Appears to function in the signal transduction from Ras activation to actin cytoskeletal remodeling. Suppresses insulin-induced promoter activities through AP1 and SRE. Mediates Rap1-induced adhesion. This is Amyloid beta A4 precursor protein-binding family B member 1-interacting protein (Apbb1ip) from Mus musculus (Mouse).